A 691-amino-acid chain; its full sequence is Elongation factor G (691 aa).

The tr-type G domain occupies 8–283 (EDYRNFGIMA…AVVDYLPSPV (276 aa)). Residues 17-24 (AHIDAGKT), 81-85 (DTPGH), and 135-138 (NKMD) each bind GTP.

Belongs to the TRAFAC class translation factor GTPase superfamily. Classic translation factor GTPase family. EF-G/EF-2 subfamily.

The protein resides in the cytoplasm. In terms of biological role, catalyzes the GTP-dependent ribosomal translocation step during translation elongation. During this step, the ribosome changes from the pre-translocational (PRE) to the post-translocational (POST) state as the newly formed A-site-bound peptidyl-tRNA and P-site-bound deacylated tRNA move to the P and E sites, respectively. Catalyzes the coordinated movement of the two tRNA molecules, the mRNA and conformational changes in the ribosome. In Methylorubrum populi (strain ATCC BAA-705 / NCIMB 13946 / BJ001) (Methylobacterium populi), this protein is Elongation factor G.